Reading from the N-terminus, the 112-residue chain is Putative pterin-4-alpha-carbinolamine dehydratase (112 aa).

This sequence belongs to the pterin-4-alpha-carbinolamine dehydratase family.

It catalyses the reaction (4aS,6R)-4a-hydroxy-L-erythro-5,6,7,8-tetrahydrobiopterin = (6R)-L-erythro-6,7-dihydrobiopterin + H2O. The protein is Putative pterin-4-alpha-carbinolamine dehydratase of Hahella chejuensis (strain KCTC 2396).